A 727-amino-acid chain; its full sequence is 1,4-alpha-glucan branching enzyme GlgB (727 aa).

Aspartate 405 functions as the Nucleophile in the catalytic mechanism. Glutamate 458 functions as the Proton donor in the catalytic mechanism.

This sequence belongs to the glycosyl hydrolase 13 family. GlgB subfamily. In terms of assembly, monomer.

It catalyses the reaction Transfers a segment of a (1-&gt;4)-alpha-D-glucan chain to a primary hydroxy group in a similar glucan chain.. The protein operates within glycan biosynthesis; glycogen biosynthesis. Catalyzes the formation of the alpha-1,6-glucosidic linkages in glycogen by scission of a 1,4-alpha-linked oligosaccharide from growing alpha-1,4-glucan chains and the subsequent attachment of the oligosaccharide to the alpha-1,6 position. The sequence is that of 1,4-alpha-glucan branching enzyme GlgB from Yersinia pestis bv. Antiqua (strain Antiqua).